The sequence spans 270 residues: Formamidopyrimidine-DNA glycosylase (270 aa).

The Schiff-base intermediate with DNA role is filled by Pro2. The active-site Proton donor is the Glu3. Lys58 (proton donor; for beta-elimination activity) is an active-site residue. Residues His91, Arg110, and Arg151 each coordinate DNA. The segment at 236-270 adopts an FPG-type zinc-finger fold; it reads FVYGRGGQPCKVCGTALREVKLGQRASVYCPRCQR. Residue Arg260 is the Proton donor; for delta-elimination activity of the active site.

The protein belongs to the FPG family. As to quaternary structure, monomer. Zn(2+) is required as a cofactor.

The catalysed reaction is Hydrolysis of DNA containing ring-opened 7-methylguanine residues, releasing 2,6-diamino-4-hydroxy-5-(N-methyl)formamidopyrimidine.. The enzyme catalyses 2'-deoxyribonucleotide-(2'-deoxyribose 5'-phosphate)-2'-deoxyribonucleotide-DNA = a 3'-end 2'-deoxyribonucleotide-(2,3-dehydro-2,3-deoxyribose 5'-phosphate)-DNA + a 5'-end 5'-phospho-2'-deoxyribonucleoside-DNA + H(+). In terms of biological role, involved in base excision repair of DNA damaged by oxidation or by mutagenic agents. Acts as a DNA glycosylase that recognizes and removes damaged bases. Has a preference for oxidized purines, such as 7,8-dihydro-8-oxoguanine (8-oxoG). Has AP (apurinic/apyrimidinic) lyase activity and introduces nicks in the DNA strand. Cleaves the DNA backbone by beta-delta elimination to generate a single-strand break at the site of the removed base with both 3'- and 5'-phosphates. The polypeptide is Formamidopyrimidine-DNA glycosylase (Pseudomonas putida (strain GB-1)).